An 86-amino-acid chain; its full sequence is Small ribosomal subunit protein bS20 (86 aa).

Residues 1–18 are compositionally biased toward basic and acidic residues; the sequence is MANIKSQEKRIRTNERAR. The segment at 1 to 25 is disordered; the sequence is MANIKSQEKRIRTNERARLRNQATK.

It belongs to the bacterial ribosomal protein bS20 family.

Its function is as follows. Binds directly to 16S ribosomal RNA. This Mycobacteroides abscessus (strain ATCC 19977 / DSM 44196 / CCUG 20993 / CIP 104536 / JCM 13569 / NCTC 13031 / TMC 1543 / L948) (Mycobacterium abscessus) protein is Small ribosomal subunit protein bS20.